A 420-amino-acid chain; its full sequence is Serine hydroxymethyltransferase (420 aa).

(6S)-5,6,7,8-tetrahydrofolate-binding positions include Leu121 and 125–127; that span reads GHL. Position 230 is an N6-(pyridoxal phosphate)lysine (Lys230). (6S)-5,6,7,8-tetrahydrofolate is bound by residues Glu246 and 354–356; that span reads SPF.

This sequence belongs to the SHMT family. In terms of assembly, homodimer. Requires pyridoxal 5'-phosphate as cofactor.

It localises to the cytoplasm. It carries out the reaction (6R)-5,10-methylene-5,6,7,8-tetrahydrofolate + glycine + H2O = (6S)-5,6,7,8-tetrahydrofolate + L-serine. Its pathway is one-carbon metabolism; tetrahydrofolate interconversion. It functions in the pathway amino-acid biosynthesis; glycine biosynthesis; glycine from L-serine: step 1/1. Functionally, catalyzes the reversible interconversion of serine and glycine with tetrahydrofolate (THF) serving as the one-carbon carrier. This reaction serves as the major source of one-carbon groups required for the biosynthesis of purines, thymidylate, methionine, and other important biomolecules. Also exhibits THF-independent aldolase activity toward beta-hydroxyamino acids, producing glycine and aldehydes, via a retro-aldol mechanism. The polypeptide is Serine hydroxymethyltransferase (Rickettsia massiliae (strain Mtu5)).